A 404-amino-acid chain; its full sequence is 6-deoxyerythronolide B hydroxylase (404 aa).

Cys351 lines the heme pocket.

Belongs to the cytochrome P450 family. The cofactor is heme.

It is found in the cytoplasm. It carries out the reaction 6-deoxyerythronolide B + 2 reduced [2Fe-2S]-[ferredoxin] + O2 + 2 H(+) = erythronolide B + 2 oxidized [2Fe-2S]-[ferredoxin] + H2O. It functions in the pathway antibiotic biosynthesis; erythromycin biosynthesis. Its function is as follows. Catalyzes the conversion of 6-deoxyerythronolide B (6-DEB) to erythronolide B (EB) by the insertion of an oxygen at the 6S position of 6-DEB. Requires the participation of a ferredoxin and a ferredoxin reductase for the transfer of electrons from NADPH to the monooxygenase. In Saccharopolyspora erythraea (strain ATCC 11635 / DSM 40517 / JCM 4748 / NBRC 13426 / NCIMB 8594 / NRRL 2338), this protein is 6-deoxyerythronolide B hydroxylase.